We begin with the raw amino-acid sequence, 593 residues long: Alanine--tRNA ligase (593 aa).

Zn(2+)-binding residues include His456, His460, Cys558, and His562.

The protein belongs to the class-II aminoacyl-tRNA synthetase family. Requires Zn(2+) as cofactor.

Its subcellular location is the cytoplasm. The enzyme catalyses tRNA(Ala) + L-alanine + ATP = L-alanyl-tRNA(Ala) + AMP + diphosphate. Catalyzes the attachment of alanine to tRNA(Ala) in a two-step reaction: alanine is first activated by ATP to form Ala-AMP and then transferred to the acceptor end of tRNA(Ala). Also edits incorrectly charged Ser-tRNA(Ala) and Gly-tRNA(Ala) via its editing domain. This Borrelia hermsii (strain HS1 / DAH) protein is Alanine--tRNA ligase (alaS).